Reading from the N-terminus, the 381-residue chain is Cobalt-precorrin-5B C(1)-methyltransferase (381 aa).

Belongs to the CbiD family.

It catalyses the reaction Co-precorrin-5B + S-adenosyl-L-methionine = Co-precorrin-6A + S-adenosyl-L-homocysteine. It participates in cofactor biosynthesis; adenosylcobalamin biosynthesis; cob(II)yrinate a,c-diamide from sirohydrochlorin (anaerobic route): step 6/10. In terms of biological role, catalyzes the methylation of C-1 in cobalt-precorrin-5B to form cobalt-precorrin-6A. The sequence is that of Cobalt-precorrin-5B C(1)-methyltransferase from Prochlorococcus marinus (strain NATL2A).